A 251-amino-acid polypeptide reads, in one-letter code: Flap endonuclease Xni (251 aa).

D104 is a Mg(2+) binding site. The 90-residue stretch at 160–249 folds into the 5'-3' exonuclease domain; that stretch reads VLPQQLPDYW…IDGNLQQLRL (90 aa). Positions 171, 172, 180, 182, and 185 each coordinate K(+). The interval 184 to 189 is interaction with DNA; sequence GIGPKS.

The protein belongs to the Xni family. Mg(2+) is required as a cofactor. It depends on K(+) as a cofactor.

Has flap endonuclease activity. During DNA replication, flap endonucleases cleave the 5'-overhanging flap structure that is generated by displacement synthesis when DNA polymerase encounters the 5'-end of a downstream Okazaki fragment. In Citrobacter koseri (strain ATCC BAA-895 / CDC 4225-83 / SGSC4696), this protein is Flap endonuclease Xni.